Here is a 443-residue protein sequence, read N- to C-terminus: Xaa-Pro dipeptidase (443 aa).

5 residues coordinate Mn(2+): Asp-246, Asp-257, His-339, Glu-384, and Glu-423.

The protein belongs to the peptidase M24B family. Bacterial-type prolidase subfamily. Mn(2+) is required as a cofactor.

The catalysed reaction is Xaa-L-Pro dipeptide + H2O = an L-alpha-amino acid + L-proline. In terms of biological role, splits dipeptides with a prolyl residue in the C-terminal position. This Salmonella choleraesuis (strain SC-B67) protein is Xaa-Pro dipeptidase.